The following is a 303-amino-acid chain: Ornithine carbamoyltransferase (303 aa).

Residues Ser52–Thr55, Gln79, Arg103, and His130–Gln133 contribute to the carbamoyl phosphate site. L-ornithine contacts are provided by residues Asn161, Asp221, and Ser225–Met226. Carbamoyl phosphate is bound by residues Cys260–Leu261 and Arg288.

This sequence belongs to the aspartate/ornithine carbamoyltransferase superfamily. OTCase family.

The protein resides in the cytoplasm. It catalyses the reaction carbamoyl phosphate + L-ornithine = L-citrulline + phosphate + H(+). Its pathway is amino-acid biosynthesis; L-arginine biosynthesis; L-arginine from L-ornithine and carbamoyl phosphate: step 1/3. In terms of biological role, reversibly catalyzes the transfer of the carbamoyl group from carbamoyl phosphate (CP) to the N(epsilon) atom of ornithine (ORN) to produce L-citrulline. In Rhizobium meliloti (strain 1021) (Ensifer meliloti), this protein is Ornithine carbamoyltransferase (argF).